The following is a 653-amino-acid chain: Exocyst complex component EXO70C1 (653 aa).

Composition is skewed to basic and acidic residues over residues 1-34 (MEKS…DELH), 159-177 (SREE…DGSN), and 438-451 (NKPE…QQQR). 3 disordered regions span residues 1-50 (MEKS…HSLV), 159-190 (SREE…DSDR), and 432-456 (EANQ…DDEE).

It belongs to the EXO70 family. Interacts with ROH1A. Binds directly to B1L. In terms of processing, phosphorylated. In terms of tissue distribution, expressed in anthers, pollen and root trichoblast cells.

The protein localises to the cytoplasm. Required for global plant growth and for male transmission. Involved in the regulation of tip growth of pollen tube. This chain is Exocyst complex component EXO70C1, found in Arabidopsis thaliana (Mouse-ear cress).